The chain runs to 1451 residues: Glutamate receptor ionotropic, NMDA 2A (1451 aa).

A signal peptide spans methionine 1 to glycine 20. Over alanine 21–alanine 547 the chain is Extracellular. Asparagine 67 is a glycosylation site (N-linked (GlcNAc...) asparagine). Cysteine 79 and cysteine 312 are disulfide-bonded. Residues histidine 120, aspartate 258, and aspartate 274 each coordinate Zn(2+). 4 N-linked (GlcNAc...) asparagine glycosylation sites follow: asparagine 332, asparagine 372, asparagine 435, and asparagine 436. Disulfide bonds link cysteine 421/cysteine 447 and cysteine 428/cysteine 448. L-glutamate is bound by residues serine 503, threonine 505, and arginine 510. The N-linked (GlcNAc...) asparagine glycan is linked to asparagine 533. A helical membrane pass occupies residues serine 548–phenylalanine 568. The Cytoplasmic segment spans residues glutamate 569 to threonine 592. The tract at residues phenylalanine 591–glutamine 612 is pore-forming. Positions isoleucine 593–glutamine 612 form an intramembrane region, discontinuously helical. The Cytoplasmic segment spans residues asparagine 613–threonine 617. Residues threonine 618 to tyrosine 637 form a helical membrane-spanning segment. Topologically, residues threonine 638–asparagine 808 are extracellular. A glycan (N-linked (GlcNAc...) asparagine) is linked at asparagine 679. L-glutamate-binding residues include serine 681, threonine 682, and aspartate 723. Residues cysteine 737 and cysteine 792 are joined by a disulfide bond. A helical transmembrane segment spans residues methionine 809–tryptophan 829. Residues glutamate 830–valine 1451 lie on the Cytoplasmic side of the membrane. Residues threonine 1011–asparagine 1022 show a composition bias toward polar residues. Disordered regions lie at residues threonine 1011 to lysine 1080 and asparagine 1100 to proline 1165. Composition is skewed to basic and acidic residues over residues cysteine 1055–lysine 1073, asparagine 1100–proline 1113, and tyrosine 1138–glutamate 1149.

Belongs to the glutamate-gated ion channel (TC 1.A.10.1) family. In terms of assembly, heterotetramer. Forms heterotetrameric channels composed of two GluN1/zeta subunits (GRIN1), and two identical GluN2/epsilon subunits (GRIN2A, GRIN2B, GRIN2C or GRIN2D) or GluN3 subunits (GRIN3A or GRIN3B) (in vitro). In vivo, the subunit composition may depend on the expression levels of the different subunits.

Its subcellular location is the cell membrane. The protein localises to the postsynaptic cell membrane. The catalysed reaction is Ca(2+)(in) = Ca(2+)(out). It catalyses the reaction Na(+)(in) = Na(+)(out). It carries out the reaction K(+)(in) = K(+)(out). Functionally, component of N-methyl-D-aspartate (NMDA) receptors (NMDARs) that function as heterotetrameric, ligand-gated cation channels with high calcium permeability and voltage-dependent block by Mg(2+). MDARs participate in synaptic plasticity. Channel activation requires binding of the neurotransmitter L-glutamate to the GluN2 subunit, glycine binding to the GluN1 subunit, plus membrane depolarization to eliminate channel inhibition by Mg(2+). NMDARs mediate simultaneously the potasium efflux and the influx of calcium and sodium. Each GluN2 subunit confers differential attributes to channel properties, including activation, deactivation and desensitization kinetics, pH sensitivity, Ca2(+) permeability, and binding to allosteric modulators. Plays a role in dendritic branching in brain neurons and in synaptic plasticity. The protein is Glutamate receptor ionotropic, NMDA 2A of Xenopus laevis (African clawed frog).